A 590-amino-acid chain; its full sequence is Cationic amino acid transporter 8, vacuolar (590 aa).

The Cytoplasmic segment spans residues M1 to L85. The helical transmembrane segment at T86–I106 threads the bilayer. The Vacuolar segment spans residues T107–G114. A helical membrane pass occupies residues A115–L135. The Cytoplasmic portion of the chain corresponds to C136–D160. A helical membrane pass occupies residues F161–L181. Residues G182 to K209 lie on the Vacuolar side of the membrane. A glycan (N-linked (GlcNAc...) asparagine) is linked at N195. The chain crosses the membrane as a helical span at residues G210 to M230. The Cytoplasmic portion of the chain corresponds to T231–W238. The helical transmembrane segment at L239–F259 threads the bilayer. Over T260 to N266 the chain is Vacuolar. The helical transmembrane segment at L267 to W287 threads the bilayer. The Cytoplasmic segment spans residues S288–P310. Residues I311–L331 traverse the membrane as a helical segment. At T332 to K359 the chain is on the vacuolar side. The chain crosses the membrane as a helical span at residues Y360–G380. Over Q381 to T407 the chain is Cytoplasmic. A helical transmembrane segment spans residues P408 to L428. Position 429 (E429) is a topological domain, vacuolar. A helical transmembrane segment spans residues V430–L450. Topologically, residues L451–G465 are cytoplasmic. Residues L466–L486 traverse the membrane as a helical segment. Topologically, residues W487–G493 are vacuolar. A helical transmembrane segment spans residues W494–L514. Residues P515–V522 are Cytoplasmic-facing. The chain crosses the membrane as a helical span at residues W523–I543. Topologically, residues G544 to R553 are vacuolar. The chain crosses the membrane as a helical span at residues F554 to Y574. The Cytoplasmic segment spans residues D575–R590.

This sequence belongs to the amino acid-polyamine-organocation (APC) superfamily. Cationic amino acid transporter (CAT) (TC 2.A.3.3) family. In terms of tissue distribution, expressed in roots, stems, flowers and leaves. Mostly present in young and rapidly dividing tissues such as the shoot and root apical meristem, and in young leaves and petioles during seedling development.

The protein resides in the cell membrane. Functionally, permease involved in the transport of the cationic neutral or acidic amino acids. The polypeptide is Cationic amino acid transporter 8, vacuolar (CAT8) (Arabidopsis thaliana (Mouse-ear cress)).